Reading from the N-terminus, the 257-residue chain is UPF0246 protein BT_3869 (257 aa).

It belongs to the UPF0246 family.

The chain is UPF0246 protein BT_3869 from Bacteroides thetaiotaomicron (strain ATCC 29148 / DSM 2079 / JCM 5827 / CCUG 10774 / NCTC 10582 / VPI-5482 / E50).